Here is a 367-residue protein sequence, read N- to C-terminus: mRNA-decapping enzyme-like protein (367 aa).

3 disordered regions span residues 144 to 179 (PKAS…RDAP), 196 to 246 (NTAS…SSSP), and 299 to 333 (PNNA…PTGP). Over residues 196–211 (NTASGSASGPYQSSAI) the composition is skewed to polar residues. The span at 212 to 234 (PHQPHQPHQPTIAPPVAAAAPPQ) shows a compositional bias: low complexity. The segment covering 299–309 (PNNASHQQRSY) has biased composition (polar residues). Positions 315–331 (QPFPPPTPPPSLAPAPT) are enriched in pro residues.

Belongs to the DCP1 family. As to quaternary structure, homodimer. Component of the decapping complex. Interacts with DCP2 and DCP5. Interacts with BCHA1. Expressed in seedlings, mostly in root tips, root hairs, and the vascular system. Also present in roots, leaves, stems, and flowers.

Its subcellular location is the cytoplasm. It localises to the P-body. In terms of biological role, as a component of the decapping complex, involved in the degradation of mRNAs. Essential for postembryonic development. The chain is mRNA-decapping enzyme-like protein from Arabidopsis thaliana (Mouse-ear cress).